Reading from the N-terminus, the 539-residue chain is Chaperonin GroEL (539 aa).

ATP is bound by residues 29–32, 86–90, Gly413, 477–479, and Asp493; these read TLGP, DGTTT, and NAA.

It belongs to the chaperonin (HSP60) family. As to quaternary structure, forms a cylinder of 14 subunits composed of two heptameric rings stacked back-to-back. Interacts with the co-chaperonin GroES.

It is found in the cytoplasm. It carries out the reaction ATP + H2O + a folded polypeptide = ADP + phosphate + an unfolded polypeptide.. Functionally, together with its co-chaperonin GroES, plays an essential role in assisting protein folding. The GroEL-GroES system forms a nano-cage that allows encapsulation of the non-native substrate proteins and provides a physical environment optimized to promote and accelerate protein folding. The protein is Chaperonin GroEL of Leifsonia xyli subsp. xyli (strain CTCB07).